The primary structure comprises 498 residues: Signal recognition particle receptor FtsY (498 aa).

2 disordered regions span residues methionine 1–serine 130 and lysine 147–serine 200. The span at alanine 36–glutamate 46 shows a compositional bias: low complexity. Residues serine 103–glutamine 120 are compositionally biased toward polar residues. Residues glycine 301–threonine 308, aspartate 383–arginine 387, and threonine 447–aspartate 450 each bind GTP.

The protein belongs to the GTP-binding SRP family. FtsY subfamily. Part of the signal recognition particle protein translocation system, which is composed of SRP and FtsY.

Its subcellular location is the cell membrane. It localises to the cytoplasm. It catalyses the reaction GTP + H2O = GDP + phosphate + H(+). Functionally, involved in targeting and insertion of nascent membrane proteins into the cytoplasmic membrane. Acts as a receptor for the complex formed by the signal recognition particle (SRP) and the ribosome-nascent chain (RNC). This is Signal recognition particle receptor FtsY from Streptococcus mutans serotype c (strain ATCC 700610 / UA159).